The following is a 494-amino-acid chain: Glutamyl-tRNA(Gln) amidotransferase subunit A (494 aa).

Residues Lys-79 and Ser-159 each act as charge relay system in the active site. Residue Ser-183 is the Acyl-ester intermediate of the active site.

This sequence belongs to the amidase family. GatA subfamily. Heterotrimer of A, B and C subunits.

The catalysed reaction is L-glutamyl-tRNA(Gln) + L-glutamine + ATP + H2O = L-glutaminyl-tRNA(Gln) + L-glutamate + ADP + phosphate + H(+). Its function is as follows. Allows the formation of correctly charged Gln-tRNA(Gln) through the transamidation of misacylated Glu-tRNA(Gln) in organisms which lack glutaminyl-tRNA synthetase. The reaction takes place in the presence of glutamine and ATP through an activated gamma-phospho-Glu-tRNA(Gln). In Bartonella bacilliformis (strain ATCC 35685 / KC583 / Herrer 020/F12,63), this protein is Glutamyl-tRNA(Gln) amidotransferase subunit A.